Consider the following 139-residue polypeptide: Putative esterase PM0788 (139 aa).

This sequence belongs to the thioesterase PaaI family.

The polypeptide is Putative esterase PM0788 (Pasteurella multocida (strain Pm70)).